We begin with the raw amino-acid sequence, 540 residues long: Chaperonin GroEL (540 aa).

ATP contacts are provided by residues 30–33 (TLGP), lysine 51, 87–91 (DGTTT), glycine 415, and aspartate 495.

The protein belongs to the chaperonin (HSP60) family. In terms of assembly, forms a cylinder of 14 subunits composed of two heptameric rings stacked back-to-back. Interacts with the co-chaperonin GroES.

It is found in the cytoplasm. The catalysed reaction is ATP + H2O + a folded polypeptide = ADP + phosphate + an unfolded polypeptide.. In terms of biological role, together with its co-chaperonin GroES, plays an essential role in assisting protein folding. The GroEL-GroES system forms a nano-cage that allows encapsulation of the non-native substrate proteins and provides a physical environment optimized to promote and accelerate protein folding. This chain is Chaperonin GroEL, found in Serratia ficaria.